The following is a 226-amino-acid chain: 7-cyano-7-deazaguanine synthase (226 aa).

Residue 12-22 (LSGGLDSATVV) participates in ATP binding. 4 residues coordinate Zn(2+): Cys-191, Cys-201, Cys-204, and Cys-207.

Belongs to the QueC family. It depends on Zn(2+) as a cofactor.

It catalyses the reaction 7-carboxy-7-deazaguanine + NH4(+) + ATP = 7-cyano-7-deazaguanine + ADP + phosphate + H2O + H(+). Its pathway is purine metabolism; 7-cyano-7-deazaguanine biosynthesis. Functionally, catalyzes the ATP-dependent conversion of 7-carboxy-7-deazaguanine (CDG) to 7-cyano-7-deazaguanine (preQ(0)). This is 7-cyano-7-deazaguanine synthase from Pseudomonas syringae pv. tomato (strain ATCC BAA-871 / DC3000).